A 177-amino-acid chain; its full sequence is CASP-like protein 2U1 (177 aa).

The helical transmembrane segment at 1–21 (MVLRIVASLLSIAALVLMAKD) threads the bilayer. Over 22–48 (KQVVYLNLAGEELTLEAKHSYVEAFVY) the chain is Cytoplasmic. The chain crosses the membrane as a helical span at residues 49 to 69 (LVYSNGLVAIYCFLLVFALVF). The Extracellular portion of the chain corresponds to 70–80 (RLIDKAGCGKS). Residues 81 to 101 (AAWIIFLLDQGLAYVLLAAAA) form a helical membrane-spanning segment. Residues 102–131 (ASTEVAYVAKRGNNKVGWSEVCSTFGHFCN) are Cytoplasmic-facing. A helical membrane pass occupies residues 132-152 (LVGVSIVITFISVLAMATLSV). Topologically, residues 153-177 (MSARRLFKTYGPERKQISSNDAPAI) are extracellular.

Belongs to the Casparian strip membrane proteins (CASP) family. In terms of assembly, homodimer and heterodimers.

It localises to the cell membrane. In Osmunda lancea (Fern), this protein is CASP-like protein 2U1.